Reading from the N-terminus, the 101-residue chain is NAD(P)H-quinone oxidoreductase subunit 4L, chloroplastic (101 aa).

Helical transmembrane passes span 2–22, 32–52, and 61–81; these read ILEH…YGLI, MCLE…SDFF, and IFCI…LAIV.

It belongs to the complex I subunit 4L family. As to quaternary structure, NDH is composed of at least 16 different subunits, 5 of which are encoded in the nucleus.

It is found in the plastid. The protein localises to the chloroplast thylakoid membrane. The enzyme catalyses a plastoquinone + NADH + (n+1) H(+)(in) = a plastoquinol + NAD(+) + n H(+)(out). It catalyses the reaction a plastoquinone + NADPH + (n+1) H(+)(in) = a plastoquinol + NADP(+) + n H(+)(out). In terms of biological role, NDH shuttles electrons from NAD(P)H:plastoquinone, via FMN and iron-sulfur (Fe-S) centers, to quinones in the photosynthetic chain and possibly in a chloroplast respiratory chain. The immediate electron acceptor for the enzyme in this species is believed to be plastoquinone. Couples the redox reaction to proton translocation, and thus conserves the redox energy in a proton gradient. This chain is NAD(P)H-quinone oxidoreductase subunit 4L, chloroplastic, found in Draba nemorosa (Woodland whitlowgrass).